The primary structure comprises 228 residues: 7-cyano-7-deazaguanine synthase (228 aa).

9–19 contacts ATP; sequence YSGGLDSTTCM. Residues C189, C199, C202, and C205 each coordinate Zn(2+).

Belongs to the QueC family. Zn(2+) serves as cofactor.

The enzyme catalyses 7-carboxy-7-deazaguanine + NH4(+) + ATP = 7-cyano-7-deazaguanine + ADP + phosphate + H2O + H(+). Its pathway is purine metabolism; 7-cyano-7-deazaguanine biosynthesis. Catalyzes the ATP-dependent conversion of 7-carboxy-7-deazaguanine (CDG) to 7-cyano-7-deazaguanine (preQ(0)). The chain is 7-cyano-7-deazaguanine synthase from Geotalea uraniireducens (strain Rf4) (Geobacter uraniireducens).